The primary structure comprises 392 residues: Phospho-N-acetylmuramoyl-pentapeptide-transferase (392 aa).

A run of 11 helical transmembrane segments spans residues 24-44 (YLTM…LLAG), 76-96 (TMGG…WFDL), 100-120 (FVWI…VDDW), 137-157 (YFWQ…CISE), 170-190 (WVQS…VPFF), 193-213 (VSYP…IVGA), 225-245 (GLAI…AYVT), 262-282 (SGEL…FLWF), 289-309 (VFMG…IAVI), 314-334 (IVLA…MLQV), and 369-389 (QVVI…LSTL).

This sequence belongs to the glycosyltransferase 4 family. MraY subfamily. It depends on Mg(2+) as a cofactor.

It localises to the cell inner membrane. The catalysed reaction is UDP-N-acetyl-alpha-D-muramoyl-L-alanyl-gamma-D-glutamyl-meso-2,6-diaminopimeloyl-D-alanyl-D-alanine + di-trans,octa-cis-undecaprenyl phosphate = di-trans,octa-cis-undecaprenyl diphospho-N-acetyl-alpha-D-muramoyl-L-alanyl-D-glutamyl-meso-2,6-diaminopimeloyl-D-alanyl-D-alanine + UMP. Its pathway is cell wall biogenesis; peptidoglycan biosynthesis. In terms of biological role, catalyzes the initial step of the lipid cycle reactions in the biosynthesis of the cell wall peptidoglycan: transfers peptidoglycan precursor phospho-MurNAc-pentapeptide from UDP-MurNAc-pentapeptide onto the lipid carrier undecaprenyl phosphate, yielding undecaprenyl-pyrophosphoryl-MurNAc-pentapeptide, known as lipid I. The sequence is that of Phospho-N-acetylmuramoyl-pentapeptide-transferase from Delftia acidovorans (strain DSM 14801 / SPH-1).